The chain runs to 151 residues: 3-dehydroquinate dehydratase 1 (151 aa).

Tyr24 acts as the Proton acceptor in catalysis. Positions 75, 81, and 88 each coordinate substrate. His101 functions as the Proton donor in the catalytic mechanism. Substrate-binding positions include 102–103 and Arg112; that span reads IS.

Belongs to the type-II 3-dehydroquinase family. In terms of assembly, homododecamer.

The enzyme catalyses 3-dehydroquinate = 3-dehydroshikimate + H2O. It participates in metabolic intermediate biosynthesis; chorismate biosynthesis; chorismate from D-erythrose 4-phosphate and phosphoenolpyruvate: step 3/7. Catalyzes a trans-dehydration via an enolate intermediate. This chain is 3-dehydroquinate dehydratase 1 (aroQ1), found in Corynebacterium efficiens (strain DSM 44549 / YS-314 / AJ 12310 / JCM 11189 / NBRC 100395).